Reading from the N-terminus, the 273-residue chain is uncharacterized protein (273 aa).

It is found in the virion. This is an uncharacterized protein from Acanthamoeba polyphaga (Amoeba).